Consider the following 60-residue polypeptide: Sperm protamine P1 (60 aa).

The interval 1-60 (MARYRHSRSRSRSRYQRRRRRRSRYRSQRRRYRRRRGSRRRRRRGRRRGYRRRYSRRRRY) is disordered.

This sequence belongs to the protamine P1 family. Testis.

The protein resides in the nucleus. It localises to the chromosome. Functionally, protamines substitute for histones in the chromatin of sperm during the haploid phase of spermatogenesis. They compact sperm DNA into a highly condensed, stable and inactive complex. This Phascolarctos cinereus (Koala) protein is Sperm protamine P1 (PRM1).